Here is a 330-residue protein sequence, read N- to C-terminus: Aspartate--ammonia ligase (330 aa).

It belongs to the class-II aminoacyl-tRNA synthetase family. AsnA subfamily.

Its subcellular location is the cytoplasm. The enzyme catalyses L-aspartate + NH4(+) + ATP = L-asparagine + AMP + diphosphate + H(+). It participates in amino-acid biosynthesis; L-asparagine biosynthesis; L-asparagine from L-aspartate (ammonia route): step 1/1. The chain is Aspartate--ammonia ligase from Aeromonas salmonicida (strain A449).